We begin with the raw amino-acid sequence, 556 residues long: MSVSAFNRRWAAVILEALTRHGVRHICIAPGSRSTPLTLAAAENSAFIHHTHFDERGLGHLALGLAKVSKQPVAVIVTSGTAVANLYPALIEAGLTGEKLILLTADRPPELIDCGANQAIRQPGMFASHPTHSISLPRPTQDIPARWLVSTIDHALGTLHAGGVHINCPFAEPLYGEMDDTGLSWQQRLGDWWQDDKPWLREAPSLESEKQRDWFFWRQKRGVVVAGRMSAEEGKKVALWAQTLGWPLIGDVLSQTGQPLPCADLWLGNAKATSELQQAQIVVQLGSSLTGKRLLQWQASCEPEEYWIVDDIEGRLDPAHHRGRRLIANIADWLELHPAEKRQPWCVEIPRLAEQAMQAVIARRDAFGEAQLAHRISDYLPEQGQLFVGNSLVVRLIDALSQLPAGYPVYSNRGASGIDGLLSTAAGVQRASGKPTLAIVGDLSALYDLNALALLRQVSAPLVLIVVNNNGGQIFSLLPTPQSERERFYLMPQNVHFEHAAAMFELKYHRPQNWQELETAFADAWRTPTTTVIEMVVNDTDGAQTLQQLQAQVSHL.

It belongs to the TPP enzyme family. MenD subfamily. As to quaternary structure, homodimer. The cofactor is Mg(2+). Mn(2+) is required as a cofactor. It depends on thiamine diphosphate as a cofactor.

The enzyme catalyses isochorismate + 2-oxoglutarate + H(+) = 5-enolpyruvoyl-6-hydroxy-2-succinyl-cyclohex-3-ene-1-carboxylate + CO2. The protein operates within quinol/quinone metabolism; 1,4-dihydroxy-2-naphthoate biosynthesis; 1,4-dihydroxy-2-naphthoate from chorismate: step 2/7. It participates in quinol/quinone metabolism; menaquinone biosynthesis. Its function is as follows. Catalyzes the thiamine diphosphate-dependent decarboxylation of 2-oxoglutarate and the subsequent addition of the resulting succinic semialdehyde-thiamine pyrophosphate anion to isochorismate to yield 2-succinyl-5-enolpyruvyl-6-hydroxy-3-cyclohexene-1-carboxylate (SEPHCHC). The sequence is that of 2-succinyl-5-enolpyruvyl-6-hydroxy-3-cyclohexene-1-carboxylate synthase from Shigella boydii serotype 18 (strain CDC 3083-94 / BS512).